Consider the following 202-residue polypeptide: uncharacterized protein (202 aa).

Disordered stretches follow at residues 1-21 and 149-202; these read MAEF…LRVP and LPAA…AAET.

This is an uncharacterized protein from Torque teno virus 1 (isolate TA278).